The primary structure comprises 99 residues: Probable non-specific lipid-transfer protein AKCS9 (99 aa).

The first 33 residues, 1–33, serve as a signal peptide directing secretion; that stretch reads MTMKMKMKMSVVCAVVVVALFLIDVGPVAEAVT. Intrachain disulfides connect Cys-34–Cys-68, Cys-42–Cys-56, Cys-57–Cys-92, and Cys-66–Cys-99.

The protein belongs to the plant LTP family. In terms of tissue distribution, expressed in most tissues except nodules.

Functionally, potential lipid transfer protein. The chain is Probable non-specific lipid-transfer protein AKCS9 from Vigna unguiculata (Cowpea).